The chain runs to 355 residues: Acidic fibroblast growth factor intracellular-binding protein B (355 aa).

Interacts with IER2.

The protein resides in the nucleus. It localises to the endomembrane system. Mediates with IER2 FGF-signaling in Kupffer's vesicle ciliogenesis and in the establishment of laterality in the embryo. May be involved in mitogenic function of FGF1. In Danio rerio (Zebrafish), this protein is Acidic fibroblast growth factor intracellular-binding protein B.